Reading from the N-terminus, the 580-residue chain is Laccase-6 (580 aa).

The first 22 residues, 1–22, serve as a signal peptide directing secretion; the sequence is MSCSWMIPVFAILAFVASAAQA. Plastocyanin-like domains are found at residues 30–148 and 158–317; these read NVAT…PRRA and EEKT…YVDA. Residues Asn-44 and Asn-78 are each glycosylated (N-linked (GlcNAc...) asparagine). Residues His-82, His-84, His-127, and His-129 each coordinate Cu cation. Asn-306, Asn-335, Asn-385, Asn-397, and Asn-462 each carry an N-linked (GlcNAc...) asparagine glycan. Residues 424–564 enclose the Plastocyanin-like 3 domain; sequence DFPDQPPVAF…AMVFEVESGP (141 aa). The Cu cation site is built by His-480, His-483, His-485, His-543, Cys-544, His-545, and His-549.

This sequence belongs to the multicopper oxidase family. It depends on Cu cation as a cofactor.

It localises to the secreted. Its subcellular location is the extracellular space. The protein localises to the apoplast. It catalyses the reaction 4 hydroquinone + O2 = 4 benzosemiquinone + 2 H2O. In terms of biological role, lignin degradation and detoxification of lignin-derived products. This Oryza sativa subsp. japonica (Rice) protein is Laccase-6 (LAC6).